A 194-amino-acid polypeptide reads, in one-letter code: Holliday junction branch migration complex subunit RuvA (194 aa).

Residues 1 to 64 form a domain I region; sequence MIGRLRGILA…EDSVSLYGFL (64 aa). A domain II region spans residues 65–140; it reads REGERRLFRD…RAADFSSGAP (76 aa). The interval 140 to 144 is flexible linker; the sequence is PITGQ. The segment at 145–194 is domain III; sequence LGPDAVSEATVALQQLGYKPAEAARMAREAGAEGDEVATVIRKALQAALR.

Belongs to the RuvA family. In terms of assembly, homotetramer. Forms an RuvA(8)-RuvB(12)-Holliday junction (HJ) complex. HJ DNA is sandwiched between 2 RuvA tetramers; dsDNA enters through RuvA and exits via RuvB. An RuvB hexamer assembles on each DNA strand where it exits the tetramer. Each RuvB hexamer is contacted by two RuvA subunits (via domain III) on 2 adjacent RuvB subunits; this complex drives branch migration. In the full resolvosome a probable DNA-RuvA(4)-RuvB(12)-RuvC(2) complex forms which resolves the HJ.

The protein localises to the cytoplasm. The RuvA-RuvB-RuvC complex processes Holliday junction (HJ) DNA during genetic recombination and DNA repair, while the RuvA-RuvB complex plays an important role in the rescue of blocked DNA replication forks via replication fork reversal (RFR). RuvA specifically binds to HJ cruciform DNA, conferring on it an open structure. The RuvB hexamer acts as an ATP-dependent pump, pulling dsDNA into and through the RuvAB complex. HJ branch migration allows RuvC to scan DNA until it finds its consensus sequence, where it cleaves and resolves the cruciform DNA. The protein is Holliday junction branch migration complex subunit RuvA of Xanthomonas campestris pv. campestris (strain 8004).